The following is an 81-amino-acid chain: UPF0434 protein msl4429 (81 aa).

Belongs to the UPF0434 family.

This is UPF0434 protein msl4429 from Mesorhizobium japonicum (strain LMG 29417 / CECT 9101 / MAFF 303099) (Mesorhizobium loti (strain MAFF 303099)).